The following is a 752-amino-acid chain: Ribosomal protein S6 kinase 2 alpha (752 aa).

Positions 80 to 339 (FELLKVLGQG…AEEIKRHPFY (260 aa)) constitute a Protein kinase 1 domain. Residues 86–94 (LGQGSFGKV) and Lys112 contribute to the ATP site. Catalysis depends on Asp205, which acts as the Proton acceptor. Phosphoserine is present on Ser239. An AGC-kinase C-terminal domain is found at 340-409 (STIDWNKLYR…VATGLMEDSK (70 aa)). Position 377 is a phosphothreonine (Thr377). Ser381 is subject to Phosphoserine. Ser398 is subject to Phosphoserine; by autocatalysis. In terms of domain architecture, Protein kinase 2 spans 435-692 (YVVKEAIGVG…AKQVLQHPWI (258 aa)). ATP-binding positions include 441 to 449 (IGVGSYSVC) and Lys464. Catalysis depends on Asp552, which acts as the Proton acceptor. Residue Thr590 is modified to Phosphothreonine. Ser749 is subject to Phosphoserine.

Belongs to the protein kinase superfamily. AGC Ser/Thr protein kinase family. S6 kinase subfamily. Mg(2+) is required as a cofactor. Autophosphorylated on Ser-398, as part of the activation process. Small and large intestine, spleen, stomach, and bursa, and to a lesser extent lung and kidney.

The catalysed reaction is L-seryl-[protein] + ATP = O-phospho-L-seryl-[protein] + ADP + H(+). It catalyses the reaction L-threonyl-[protein] + ATP = O-phospho-L-threonyl-[protein] + ADP + H(+). Its activity is regulated as follows. Activated by multiple phosphorylations on threonine and serine residues. Functionally, serine/threonine kinase that may play a role in mediating the growth-factor and stress induced activation of transcription. This chain is Ribosomal protein S6 kinase 2 alpha (RPS6KA), found in Gallus gallus (Chicken).